We begin with the raw amino-acid sequence, 67 residues long: DNA-directed RNA polymerase subunit omega (67 aa).

This sequence belongs to the RNA polymerase subunit omega family. In terms of assembly, the RNAP catalytic core consists of 2 alpha, 1 beta, 1 beta' and 1 omega subunit. When a sigma factor is associated with the core the holoenzyme is formed, which can initiate transcription.

It carries out the reaction RNA(n) + a ribonucleoside 5'-triphosphate = RNA(n+1) + diphosphate. Its function is as follows. Promotes RNA polymerase assembly. Latches the N- and C-terminal regions of the beta' subunit thereby facilitating its interaction with the beta and alpha subunits. This is DNA-directed RNA polymerase subunit omega from Listeria monocytogenes serotype 4b (strain F2365).